The sequence spans 287 residues: ATP synthase gamma chain (287 aa).

It belongs to the ATPase gamma chain family. As to quaternary structure, F-type ATPases have 2 components, CF(1) - the catalytic core - and CF(0) - the membrane proton channel. CF(1) has five subunits: alpha(3), beta(3), gamma(1), delta(1), epsilon(1). CF(0) has three main subunits: a, b and c.

It localises to the cell inner membrane. Produces ATP from ADP in the presence of a proton gradient across the membrane. The gamma chain is believed to be important in regulating ATPase activity and the flow of protons through the CF(0) complex. The sequence is that of ATP synthase gamma chain from Methylococcus capsulatus (strain ATCC 33009 / NCIMB 11132 / Bath).